The following is a 646-amino-acid chain: Phosphomethylpyrimidine synthase (646 aa).

Polar residues predominate over residues 1–13 (MNIRSNPDTTRPA). The segment at 1–30 (MNIRSNPDTTRPAVTTGALPSSRKMFSAPD) is disordered. Substrate contacts are provided by residues asparagine 221, methionine 250, tyrosine 279, histidine 315, 335–337 (SRG), 376–379 (DGLR), and glutamate 415. Residue histidine 419 coordinates Zn(2+). A substrate-binding site is contributed by tyrosine 442. Histidine 483 contributes to the Zn(2+) binding site. Positions 563, 566, and 571 each coordinate [4Fe-4S] cluster.

This sequence belongs to the ThiC family. As to quaternary structure, homodimer. The cofactor is [4Fe-4S] cluster.

The enzyme catalyses 5-amino-1-(5-phospho-beta-D-ribosyl)imidazole + S-adenosyl-L-methionine = 4-amino-2-methyl-5-(phosphooxymethyl)pyrimidine + CO + 5'-deoxyadenosine + formate + L-methionine + 3 H(+). It functions in the pathway cofactor biosynthesis; thiamine diphosphate biosynthesis. Functionally, catalyzes the synthesis of the hydroxymethylpyrimidine phosphate (HMP-P) moiety of thiamine from aminoimidazole ribotide (AIR) in a radical S-adenosyl-L-methionine (SAM)-dependent reaction. The protein is Phosphomethylpyrimidine synthase of Nitrobacter winogradskyi (strain ATCC 25391 / DSM 10237 / CIP 104748 / NCIMB 11846 / Nb-255).